Consider the following 20-residue polypeptide: GMP synthase [glutamine-hydrolyzing] (20 aa).

One can recognise a GMPS ATP-PPase domain in the interval 1-20 (ALGDQLLSVFVDHTLVDEVA).

As to quaternary structure, homodimer.

The enzyme catalyses XMP + L-glutamine + ATP + H2O = GMP + L-glutamate + AMP + diphosphate + 2 H(+). It participates in purine metabolism; GMP biosynthesis; GMP from XMP (L-Gln route): step 1/1. Its function is as follows. Catalyzes the synthesis of GMP from XMP. The sequence is that of GMP synthase [glutamine-hydrolyzing] (guaA) from Fructilactobacillus sanfranciscensis (Lactobacillus sanfranciscensis).